The sequence spans 205 residues: N-(5'-phosphoribosyl)anthranilate isomerase (205 aa).

This sequence belongs to the TrpF family.

It carries out the reaction N-(5-phospho-beta-D-ribosyl)anthranilate = 1-(2-carboxyphenylamino)-1-deoxy-D-ribulose 5-phosphate. The protein operates within amino-acid biosynthesis; L-tryptophan biosynthesis; L-tryptophan from chorismate: step 3/5. This chain is N-(5'-phosphoribosyl)anthranilate isomerase (TRP1), found in Zygosaccharomyces bailii.